Consider the following 155-residue polypeptide: HTH-type transcriptional regulator IscR (155 aa).

Positions 2–136 (KLSTKGRYAM…HQTRLSDIIK (135 aa)) constitute an HTH rrf2-type domain. Positions 30–53 (LAEVSKRQDISLPYLEQLFVKLRR) form a DNA-binding region, H-T-H motif. The tract at residues 141-145 (PCPAV) is heme regulatory motif (HRM). Position 142 (Cys-142) interacts with [2Fe-2S] cluster.

[2Fe-2S] cluster is required as a cofactor.

In terms of biological role, regulates the transcription of several operons and genes involved in the biogenesis of Fe-S clusters and Fe-S-containing proteins. Functions as a transcriptional repressor of genes involved in iron metabolism by directly binding to the promoter region of genes preceded by the Iron-Rhodo-box motif. Binds to iscR and hemP promoter regions independently of an Fe-S cluster, but their transcriptional repression is Fe-S cluster-dependent. Seems to activate some target genes in a Fe-S cluster-independent manner. Negatively regulates its own transcription in the presence of iron only. The sequence is that of HTH-type transcriptional regulator IscR from Cereibacter sphaeroides (strain ATCC 17023 / DSM 158 / JCM 6121 / CCUG 31486 / LMG 2827 / NBRC 12203 / NCIMB 8253 / ATH 2.4.1.) (Rhodobacter sphaeroides).